The chain runs to 579 residues: Type II methyltransferase M.BseCI (579 aa).

The protein belongs to the N(4)/N(6)-methyltransferase family.

It carries out the reaction a 2'-deoxyadenosine in DNA + S-adenosyl-L-methionine = an N(6)-methyl-2'-deoxyadenosine in DNA + S-adenosyl-L-homocysteine + H(+). A gamma subtype methylase, recognizes the double-stranded sequence 5'-ATCGAT-3', methylation on A-5 on both strands, and protects the DNA from cleavage by the BanIII endonuclease. This Geobacillus stearothermophilus (Bacillus stearothermophilus) protein is Type II methyltransferase M.BseCI.